We begin with the raw amino-acid sequence, 1637 residues long: Endoribonuclease Dicer homolog 3b (1637 aa).

A disordered region spans residues 1–40; it reads MADDEAAVLPPPPPLPPPCRPHRQLRPRGSRPTADTTPRT. Residues 9 to 19 are compositionally biased toward pro residues; that stretch reads LPPPPPLPPPC. A compositionally biased stretch (basic residues) spans 20–29; the sequence is RPHRQLRPRG. One can recognise a Helicase ATP-binding domain in the interval 46-222; it reads VFEAALRGNT…LHNCEAHISQ (177 aa). 59-66 is a binding site for ATP; the sequence is LDTGSGKT. The short motif at 169–172 is the DECH box element; that stretch reads DECH. One can recognise a Helicase C-terminal domain in the interval 404–556; it reads SFGSSNEVLC…ALYRHPNALS (153 aa). The Dicer dsRNA-binding fold domain maps to 581 to 671; that stretch reads CVNLIRKYCE…VPLTEEPMDT (91 aa). Residues 882 to 1006 enclose the PAZ domain; that stretch reads EIIHLANKSL…VPPELLIHLD (125 aa). Residues 1031–1200 form the RNase III 1 domain; it reads ASQLRREIGY…LVGAYYVGGG (170 aa). Mg(2+) contacts are provided by aspartate 1214, aspartate 1309, and serine 1312. One can recognise an RNase III 2 domain in the interval 1241-1389; that stretch reads IEELEAKLKY…IAGAVFIDTD (149 aa). DRBM domains follow at residues 1412-1481 and 1545-1629; these read LALP…DLKQ and GPRS…KLQE.

Belongs to the helicase family. Dicer subfamily. As to quaternary structure, may interact with ARGONAUTE1 or PINHEAD through their common PAZ domains. It depends on Mg(2+) as a cofactor. Mn(2+) is required as a cofactor.

The protein localises to the nucleus. Its function is as follows. Probably involved in the RNA silencing pathway. May cleave double-stranded RNA to produce short 21-24 nucleotides (nt) RNAs which target the selective destruction of complementary RNAs. In Oryza sativa subsp. japonica (Rice), this protein is Endoribonuclease Dicer homolog 3b (DCL3B).